The following is a 761-amino-acid chain: Phosphoribosylformylglycinamidine synthase subunit PurL (761 aa).

Histidine 49 is a catalytic residue. Tyrosine 52 and lysine 92 together coordinate ATP. Glutamate 94 is a binding site for Mg(2+). Substrate contacts are provided by residues 95–98 (SHNH) and arginine 117. The Proton acceptor role is filled by histidine 96. Residue aspartate 118 coordinates Mg(2+). Substrate is bound at residue glutamine 241. Aspartate 269 lines the Mg(2+) pocket. 318–320 (ESQ) contacts substrate. Asparagine 502 and glycine 539 together coordinate ATP. Asparagine 540 is a binding site for Mg(2+). Serine 542 serves as a coordination point for substrate.

This sequence belongs to the FGAMS family. As to quaternary structure, monomer. Part of the FGAM synthase complex composed of 1 PurL, 1 PurQ and 2 PurS subunits.

It localises to the cytoplasm. It carries out the reaction N(2)-formyl-N(1)-(5-phospho-beta-D-ribosyl)glycinamide + L-glutamine + ATP + H2O = 2-formamido-N(1)-(5-O-phospho-beta-D-ribosyl)acetamidine + L-glutamate + ADP + phosphate + H(+). It participates in purine metabolism; IMP biosynthesis via de novo pathway; 5-amino-1-(5-phospho-D-ribosyl)imidazole from N(2)-formyl-N(1)-(5-phospho-D-ribosyl)glycinamide: step 1/2. Part of the phosphoribosylformylglycinamidine synthase complex involved in the purines biosynthetic pathway. Catalyzes the ATP-dependent conversion of formylglycinamide ribonucleotide (FGAR) and glutamine to yield formylglycinamidine ribonucleotide (FGAM) and glutamate. The FGAM synthase complex is composed of three subunits. PurQ produces an ammonia molecule by converting glutamine to glutamate. PurL transfers the ammonia molecule to FGAR to form FGAM in an ATP-dependent manner. PurS interacts with PurQ and PurL and is thought to assist in the transfer of the ammonia molecule from PurQ to PurL. This chain is Phosphoribosylformylglycinamidine synthase subunit PurL, found in Chlorobium chlorochromatii (strain CaD3).